Reading from the N-terminus, the 165-residue chain is Large ribosomal subunit protein uL11 (165 aa).

Arg-67 carries the post-translational modification N5-methylarginine.

This sequence belongs to the universal ribosomal protein uL11 family. As to quaternary structure, component of the large ribosomal subunit (LSU). Mature N.crassa ribosomes consist of a small (40S) and a large (60S) subunit. The 40S small subunit contains 1 molecule of ribosomal RNA (18S rRNA) and at least 32 different proteins. The large 60S subunit contains 3 rRNA molecules (26S, 5.8S and 5S rRNA) and at least 42 different proteins.

Its subcellular location is the cytoplasm. Component of the ribosome, a large ribonucleoprotein complex responsible for the synthesis of proteins in the cell. The small ribosomal subunit (SSU) binds messenger RNAs (mRNAs) and translates the encoded message by selecting cognate aminoacyl-transfer RNA (tRNA) molecules. The large subunit (LSU) contains the ribosomal catalytic site termed the peptidyl transferase center (PTC), which catalyzes the formation of peptide bonds, thereby polymerizing the amino acids delivered by tRNAs into a polypeptide chain. The nascent polypeptides leave the ribosome through a tunnel in the LSU and interact with protein factors that function in enzymatic processing, targeting, and the membrane insertion of nascent chains at the exit of the ribosomal tunnel. This Neurospora crassa (strain ATCC 24698 / 74-OR23-1A / CBS 708.71 / DSM 1257 / FGSC 987) protein is Large ribosomal subunit protein uL11 (rpl-12).